Consider the following 880-residue polypeptide: Leucine--tRNA ligase (880 aa).

The 'HIGH' region motif lies at 46 to 56; the sequence is PYPSGALHMGH. The short motif at 638–642 is the 'KMSKS' region element; the sequence is KMSKS. Lys641 is an ATP binding site.

This sequence belongs to the class-I aminoacyl-tRNA synthetase family.

The protein localises to the cytoplasm. The enzyme catalyses tRNA(Leu) + L-leucine + ATP = L-leucyl-tRNA(Leu) + AMP + diphosphate. The polypeptide is Leucine--tRNA ligase (Stenotrophomonas maltophilia (strain R551-3)).